Here is a 196-residue protein sequence, read N- to C-terminus: Adenylate kinase (196 aa).

Residue 9–17 participates in ATP binding; that stretch reads GIPGVGKST.

This sequence belongs to the archaeal adenylate kinase family.

The protein resides in the cytoplasm. The enzyme catalyses AMP + ATP = 2 ADP. The chain is Adenylate kinase from Thermococcus onnurineus (strain NA1).